The sequence spans 295 residues: Nucleotide-binding protein SSU98_0619 (295 aa).

Residue Gly12–Thr19 coordinates ATP. Position 62–65 (Asp62–Ser65) interacts with GTP.

The protein belongs to the RapZ-like family.

Displays ATPase and GTPase activities. This Streptococcus suis (strain 98HAH33) protein is Nucleotide-binding protein SSU98_0619.